Reading from the N-terminus, the 665-residue chain is Long chain acyl-CoA synthetase 3 (665 aa).

228-239 (IMYTSGTTGDPK) contacts ATP. The interval 495–519 (DGWLHTGDVGEWQPDGAMKIIDRKK) is fatty acid-binding.

Belongs to the ATP-dependent AMP-binding enzyme family. Requires Mg(2+) as cofactor.

The catalysed reaction is a long-chain fatty acid + ATP + CoA = a long-chain fatty acyl-CoA + AMP + diphosphate. Its pathway is lipid metabolism; fatty acid metabolism. Activation of long-chain fatty acids for both synthesis of cellular lipids, and degradation via beta-oxidation. Preferentially uses palmitate, palmitoleate, oleate and linoleate. The sequence is that of Long chain acyl-CoA synthetase 3 (LACS3) from Arabidopsis thaliana (Mouse-ear cress).